The chain runs to 58 residues: Small ribosomal subunit protein bS21B (58 aa).

The protein belongs to the bacterial ribosomal protein bS21 family.

In Trichormus variabilis (strain ATCC 29413 / PCC 7937) (Anabaena variabilis), this protein is Small ribosomal subunit protein bS21B.